A 478-amino-acid polypeptide reads, in one-letter code: Cysteine protease ATG4B (478 aa).

Residues 1–15 (MTSLPDRGVSSSSSD) show a composition bias toward polar residues. Residues 1 to 20 (MTSLPDRGVSSSSSDPLCEG) form a disordered region. Residue Cys164 is the Nucleophile of the active site. Residues Asp361 and His363 contribute to the active site.

It belongs to the peptidase C54 family. As to quaternary structure, interacts with ATG8. In terms of tissue distribution, constitutively expressed.

It is found in the cytoplasm. It carries out the reaction [protein]-C-terminal L-amino acid-glycyl-phosphatidylethanolamide + H2O = [protein]-C-terminal L-amino acid-glycine + a 1,2-diacyl-sn-glycero-3-phosphoethanolamine. Cysteine protease that plays a key role in autophagy by mediating both proteolytic activation and delipidation of ATG8 family proteins. The protease activity is required for proteolytic activation of ATG8 family proteins: cleaves the C-terminal amino acid of ATG8 proteins to reveal a C-terminal glycine. Exposure of the glycine at the C-terminus is essential for ATG8 proteins conjugation to phosphatidylethanolamine (PE) and insertion to membranes, which is necessary for autophagy. In addition to the protease activity, also mediates delipidation of PE-conjugated ATG8 proteins. The protein is Cysteine protease ATG4B (ATG4B) of Oryza sativa subsp. indica (Rice).